The primary structure comprises 438 residues: Exosome complex component RRP45B (438 aa).

2 disordered regions span residues 293-322 (PTLA…RAAE) and 334-438 (STEE…KNKS). 2 stretches are compositionally biased toward basic and acidic residues: residues 307-322 (VKEE…RAAE) and 334-347 (STEE…EEAA). Positions 380 to 394 (TKSSSTKKMNGSGNA) are enriched in polar residues. Over residues 410–429 (LGKKDTKHKDGEMTLKDAVK) the composition is skewed to basic and acidic residues.

The protein belongs to the RNase PH family.

The protein localises to the cytoplasm. Its subcellular location is the nucleus. Its function is as follows. Probable 3'-&gt;5' exoribonuclease involved in the regulation of cuticular wax biosynthesis by controlling the expression of CER3. May act by degrading a specific mRNA species encoding a negative regulator of CER3 transcription. Can perform exosomal functions and complement the yeast rrp45 null mutant. This is Exosome complex component RRP45B from Arabidopsis thaliana (Mouse-ear cress).